The following is a 518-amino-acid chain: MPHHEFECSKVIPERKKHAVIKGKGETLADALPQGYLNTIPGSISERGCAYCVAKHVIGTPMKDVIHISHGPVGCTYDTWQTKRYISDNDNFQLKYTYATDVKEKHIVFGAEKLLKQNIIEAFKRFPQIKRMTIYQTPCTALIGDDINAIAEEVMEEMPEVDIFVCNSPGFAGPSQSGGHHKINIAWINQKVGTVEPEITGDHVINYVGEYNIQGDQEVMVDYFKRMGIQVLSTFTGNLSYDGLRAMHRAHLNVLECARSAEYICNELRVRYGIPRLDIDGFGFKPLADSLRKYGMFFGIEDRRKAIIDEEVARWKPELDWYKERLMGKKVSVWPGGSKLWHWAHVIEEEMGLKVVSVYTKFGHQGDMEKGMPRCGEGTLAIDDPNELEGLEALEMLKPDIILTGKRPGEVAKKVRVPYLNAHAYHNGPYKGFEGWVRFARDIYNAIYSPIHQLSGIDITKDNAPEWGNGFRTRQMLSDGNLSDAVRNSETLAQYTGGYDSVSNVREREYPAFERKVG.

Residues cysteine 49 and cysteine 75 each coordinate [8Fe-7S] cluster. Cysteine 257 and histidine 423 together coordinate [8Fe-9S-C-homocitryl] cluster.

As to quaternary structure, hexamer of two alpha, two beta, and two delta chains. Requires [8Fe-7S] cluster as cofactor. [8Fe-9S-C-homocitryl] cluster is required as a cofactor.

The catalysed reaction is N2 + 8 reduced [2Fe-2S]-[ferredoxin] + 16 ATP + 16 H2O = H2 + 8 oxidized [2Fe-2S]-[ferredoxin] + 2 NH4(+) + 16 ADP + 16 phosphate + 6 H(+). Functionally, this iron-iron protein is part of the nitrogenase complex that catalyzes the key enzymatic reactions in nitrogen fixation. Other nitrogenase complexes utilize a molybdenum-iron protein or a vanadium-iron protein. In Ruminiclostridium hungatei (Clostridium hungatei), this protein is Nitrogenase iron-iron protein alpha chain (anfD).